The primary structure comprises 317 residues: 4-hydroxy-3-methylbut-2-enyl diphosphate reductase (317 aa).

C12 contacts [4Fe-4S] cluster. (2E)-4-hydroxy-3-methylbut-2-enyl diphosphate-binding residues include H41 and H74. Positions 41 and 74 each coordinate dimethylallyl diphosphate. Isopentenyl diphosphate contacts are provided by H41 and H74. Position 96 (C96) interacts with [4Fe-4S] cluster. (2E)-4-hydroxy-3-methylbut-2-enyl diphosphate is bound at residue H124. Dimethylallyl diphosphate is bound at residue H124. Residue H124 coordinates isopentenyl diphosphate. E126 serves as the catalytic Proton donor. T169 is a binding site for (2E)-4-hydroxy-3-methylbut-2-enyl diphosphate. Residue C199 coordinates [4Fe-4S] cluster. S227, S228, N229, and S271 together coordinate (2E)-4-hydroxy-3-methylbut-2-enyl diphosphate. The dimethylallyl diphosphate site is built by S227, S228, N229, and S271. The isopentenyl diphosphate site is built by S227, S228, N229, and S271.

The protein belongs to the IspH family. The cofactor is [4Fe-4S] cluster.

It catalyses the reaction isopentenyl diphosphate + 2 oxidized [2Fe-2S]-[ferredoxin] + H2O = (2E)-4-hydroxy-3-methylbut-2-enyl diphosphate + 2 reduced [2Fe-2S]-[ferredoxin] + 2 H(+). It carries out the reaction dimethylallyl diphosphate + 2 oxidized [2Fe-2S]-[ferredoxin] + H2O = (2E)-4-hydroxy-3-methylbut-2-enyl diphosphate + 2 reduced [2Fe-2S]-[ferredoxin] + 2 H(+). It functions in the pathway isoprenoid biosynthesis; dimethylallyl diphosphate biosynthesis; dimethylallyl diphosphate from (2E)-4-hydroxy-3-methylbutenyl diphosphate: step 1/1. The protein operates within isoprenoid biosynthesis; isopentenyl diphosphate biosynthesis via DXP pathway; isopentenyl diphosphate from 1-deoxy-D-xylulose 5-phosphate: step 6/6. Functionally, catalyzes the conversion of 1-hydroxy-2-methyl-2-(E)-butenyl 4-diphosphate (HMBPP) into a mixture of isopentenyl diphosphate (IPP) and dimethylallyl diphosphate (DMAPP). Acts in the terminal step of the DOXP/MEP pathway for isoprenoid precursor biosynthesis. The protein is 4-hydroxy-3-methylbut-2-enyl diphosphate reductase of Vibrio parahaemolyticus serotype O3:K6 (strain RIMD 2210633).